The following is an 89-amino-acid chain: Small ribosomal subunit protein uS17 (89 aa).

The protein belongs to the universal ribosomal protein uS17 family. In terms of assembly, part of the 30S ribosomal subunit.

Its function is as follows. One of the primary rRNA binding proteins, it binds specifically to the 5'-end of 16S ribosomal RNA. This is Small ribosomal subunit protein uS17 from Verminephrobacter eiseniae (strain EF01-2).